The primary structure comprises 259 residues: Small ribosomal subunit protein uS2 (259 aa).

This sequence belongs to the universal ribosomal protein uS2 family.

The chain is Small ribosomal subunit protein uS2 from Fervidobacterium nodosum (strain ATCC 35602 / DSM 5306 / Rt17-B1).